A 171-amino-acid polypeptide reads, in one-letter code: Lipoprotein signal peptidase (171 aa).

Transmembrane regions (helical) follow at residues 7–27 (GLIALLATLALDQASKLWLYF), 64–84 (LGRWLLVAVSLAAVIGLSVWM), and 88–108 (GSRLLAVALGLIVGGALGNAI). Active-site residues include aspartate 118 and aspartate 136. A helical membrane pass occupies residues 128 to 148 (SWYVFNVADAAIVAGVVGLIL).

The protein belongs to the peptidase A8 family.

It is found in the cell inner membrane. It catalyses the reaction Release of signal peptides from bacterial membrane prolipoproteins. Hydrolyzes -Xaa-Yaa-Zaa-|-(S,diacylglyceryl)Cys-, in which Xaa is hydrophobic (preferably Leu), and Yaa (Ala or Ser) and Zaa (Gly or Ala) have small, neutral side chains.. It participates in protein modification; lipoprotein biosynthesis (signal peptide cleavage). This protein specifically catalyzes the removal of signal peptides from prolipoproteins. The sequence is that of Lipoprotein signal peptidase from Methylorubrum extorquens (strain PA1) (Methylobacterium extorquens).